Consider the following 441-residue polypeptide: Matrix extracellular phosphoglycoprotein (441 aa).

Positions 1–24 are cleaved as a signal peptide; that stretch reads MTPEGLMKMQAVSVGLLLFSMTWA. Asparagine 82 is a glycosylation site (N-linked (GlcNAc...) asparagine). The tract at residues 137-441 is disordered; it reads QSSPVKSKHT…SGSSSESHGD (305 aa). Over residues 142–156 the composition is skewed to basic residues; sequence KSKHTKHTRQTRRST. Residues 178–200 are dentonin; sequence PDLLVRGDNDVPPFSGDGQHFMH. Positions 183–185 match the Cell attachment site motif; it reads RGD. An O-linked (Xyl...) (chondroitin sulfate) serine glycan is attached at serine 192. The span at 211–223 shows a compositional bias: polar residues; sequence PESSTSRPLSGSS. Positions 313-325 are enriched in basic and acidic residues; the sequence is SREKVKGGVEHAG. Composition is skewed to polar residues over residues 349 to 358 and 391 to 405; these read GNQLTLTASQ and GQNNLTPNKGMSQRR. An ASARM motif; interaction with PHEX region spans residues 424–441; the sequence is RDSSESSSSGSSSESHGD. The span at 428–441 shows a compositional bias: low complexity; that stretch reads ESSSSGSSSESHGD.

The protein belongs to the PF07175/osteoregulin family. In terms of assembly, interacts (via ASARM motif) with PHEX; the interaction is zinc-dependent. Post-translationally, phosphorylated on serine residues in the ASARM motif; the phosphorylation is important for the inhibition of bone mineralization. Cleaved by CTSB/cathepsin B; the cleavage is blocked by metalloprotease PHEX. Expressed in osteocytes (at protein level). Expressed by chondrocytes, specifically in the hypertrophic zone of the bone growth plate (at protein level). Expressed in osteoblasts in bone (at protein level). Expressed by osteoblasts within the metaphysis (at protein level). Expressed at low levels in white fat, brown fat, testes, brain and aorta. Expressed in the craniofacial complex (at protein level). Expressed in odontoblasts, ameloblasts and in predentin during tooth development (at protein level). Expressed in the kidney (at protein level). Expressed in osteocytes in mandibular condylar cartilage and tibial cartilage (at protein level). Expressed in salivary glands.

It is found in the secreted. The protein resides in the extracellular space. The protein localises to the extracellular matrix. Its function is as follows. Regulates renal phosphate and uric acid excretion. Regulates bone mineralization by osteoblasts and cartilage mineralization by chondrocytes. Regulates the mineralization of the extracellular matrix of the craniofacial complex, such as teeth, bone and cartilage. Increases dental pulp stem cell proliferation. The polypeptide is Matrix extracellular phosphoglycoprotein (Mus musculus (Mouse)).